We begin with the raw amino-acid sequence, 540 residues long: ATP-dependent RNA helicase DBP3 (540 aa).

Positions Met-1–Asp-35 are enriched in basic and acidic residues. A disordered region spans residues Met-1–Lys-89. The segment covering Lys-36–Lys-52 has biased composition (basic residues). Basic and acidic residues-rich tracts occupy residues Glu-53 to Asp-62 and Asp-68 to Glu-79. Residues Leu-130–Ala-156 carry the Q motif motif. A Helicase ATP-binding domain is found at Trp-159–Val-332. Ala-172–Thr-179 is an ATP binding site. The short motif at Asp-279–Asp-282 is the DEAD box element. In terms of domain architecture, Helicase C-terminal spans Lys-361–Gly-510.

This sequence belongs to the DEAD box helicase family. DDX5/DBP2 subfamily.

It localises to the nucleus. The protein localises to the nucleolus. The catalysed reaction is ATP + H2O = ADP + phosphate + H(+). Its function is as follows. ATP-dependent RNA helicase required for 60S ribosomal subunit synthesis. Involved in efficient pre-rRNA processing, predominantly at site A3, which is necessary for the normal formation of 25S and 5.8S rRNAs. This is ATP-dependent RNA helicase DBP3 (DBP3) from Candida glabrata (strain ATCC 2001 / BCRC 20586 / JCM 3761 / NBRC 0622 / NRRL Y-65 / CBS 138) (Yeast).